A 335-amino-acid polypeptide reads, in one-letter code: Trans-1,2-dihydrobenzene-1,2-diol dehydrogenase (335 aa).

The protein belongs to the Gfo/Idh/MocA family. As to quaternary structure, homodimer. As to expression, liver, lens, spleen, kidney and small intestine.

It catalyses the reaction (1R,2R)-1,2-dihydrobenzene-1,2-diol + NADP(+) = catechol + NADPH + H(+). The catalysed reaction is D-xylose + NADP(+) = D-xylono-1,5-lactone + NADPH + H(+). With respect to regulation, strongly inhibited by isoascorbic acid, 4-hydroxyacetophenone and chloromercuriphenylsulphonate. Stimulated by various salts. In Sus scrofa (Pig), this protein is Trans-1,2-dihydrobenzene-1,2-diol dehydrogenase (DHDH).